The sequence spans 316 residues: ATP synthase gamma chain (316 aa).

It belongs to the ATPase gamma chain family. F-type ATPases have 2 components, CF(1) - the catalytic core - and CF(0) - the membrane proton channel. CF(1) has five subunits: alpha(3), beta(3), gamma(1), delta(1), epsilon(1). CF(0) has three main subunits: a, b and c.

It localises to the cellular thylakoid membrane. Produces ATP from ADP in the presence of a proton gradient across the membrane. The gamma chain is believed to be important in regulating ATPase activity and the flow of protons through the CF(0) complex. The sequence is that of ATP synthase gamma chain from Prochlorococcus marinus (strain NATL1A).